Reading from the N-terminus, the 227-residue chain is 2-C-methyl-D-erythritol 4-phosphate cytidylyltransferase (227 aa).

Belongs to the IspD/TarI cytidylyltransferase family. IspD subfamily.

The enzyme catalyses 2-C-methyl-D-erythritol 4-phosphate + CTP + H(+) = 4-CDP-2-C-methyl-D-erythritol + diphosphate. Its pathway is isoprenoid biosynthesis; isopentenyl diphosphate biosynthesis via DXP pathway; isopentenyl diphosphate from 1-deoxy-D-xylulose 5-phosphate: step 2/6. Catalyzes the formation of 4-diphosphocytidyl-2-C-methyl-D-erythritol from CTP and 2-C-methyl-D-erythritol 4-phosphate (MEP). This is 2-C-methyl-D-erythritol 4-phosphate cytidylyltransferase from Lachnospira eligens (strain ATCC 27750 / DSM 3376 / VPI C15-48 / C15-B4) (Eubacterium eligens).